Here is a 1766-residue protein sequence, read N- to C-terminus: DNA-directed RNA polymerase II subunit RPB1-B (1766 aa).

Zn(2+) is bound by residues Cys-69, Cys-72, Cys-79, and His-82. 3 residues coordinate Mg(2+): Asp-487, Asp-489, and Asp-491. A bridging helix region spans residues 813–825 (PHEFFFHTMAGRE). The segment at 1660 to 1766 (HAMSSAAPPS…EFGDEEEEEQ (107 aa)) is disordered. The span at 1706-1716 (RGDEPSTHRSD) shows a compositional bias: basic and acidic residues. The segment covering 1742–1756 (PTAKTPQQAAPPTAA) has biased composition (low complexity).

Belongs to the RNA polymerase beta' chain family. In terms of assembly, component of the RNA polymerase II (Pol II) complex consisting of 12 subunits.

Its subcellular location is the nucleus. The enzyme catalyses RNA(n) + a ribonucleoside 5'-triphosphate = RNA(n+1) + diphosphate. Its function is as follows. DNA-dependent RNA polymerase catalyzes the transcription of DNA into RNA using the four ribonucleoside triphosphates as substrates. Largest and catalytic component of RNA polymerase II which synthesizes mRNA precursors and many functional non-coding RNAs. Forms the polymerase active center together with the second largest subunit. Pol II is the central component of the basal RNA polymerase II transcription machinery. It is composed of mobile elements that move relative to each other. RPB1 is part of the core element with the central large cleft, the clamp element that moves to open and close the cleft and the jaws that are thought to grab the incoming DNA template. At the start of transcription, a single-stranded DNA template strand of the promoter is positioned within the central active site cleft of Pol II. A bridging helix emanates from RPB1 and crosses the cleft near the catalytic site and is thought to promote translocation of Pol II by acting as a ratchet that moves the RNA-DNA hybrid through the active site by switching from straight to bent conformations at each step of nucleotide addition. During transcription elongation, Pol II moves on the template as the transcript elongates. In Trypanosoma brucei brucei, this protein is DNA-directed RNA polymerase II subunit RPB1-B (TRP5.9).